A 436-amino-acid polypeptide reads, in one-letter code: Eukaryotic peptide chain release factor subunit 1-1 (436 aa).

Belongs to the eukaryotic release factor 1 family. Heterodimer of two subunits, one of which binds GTP.

It localises to the cytoplasm. Directs the termination of nascent peptide synthesis (translation) in response to the termination codons UAA, UAG and UGA. Modulates plant growth and development. This Arabidopsis thaliana (Mouse-ear cress) protein is Eukaryotic peptide chain release factor subunit 1-1 (ERF1-1).